Reading from the N-terminus, the 384-residue chain is GDP-mannose transporter (384 aa).

Residues 1–40 (MVEDKKTDDYTIEMDKMDQGSKNFEAAAPPPQPRTPPAGS) are Cytoplasmic-facing. A helical membrane pass occupies residues 41–61 (ISNNPILPVLAYCGSSILMTV). At 62-69 (MNKYVLSG) the chain is on the lumenal side. The helical transmembrane segment at 70-90 (LDFNLNFFLLCVQSIVCIVAI) threads the bilayer. Residues 91 to 110 (QTCKSCGLITYRDFSADEAR) are Cytoplasmic-facing. The chain crosses the membrane as a helical span at residues 111-127 (KWFPITLLLIGMIYTGS). The Lumenal portion of the chain corresponds to 128 to 134 (KALQFLS). The chain crosses the membrane as a helical span at residues 135 to 151 (IPVYTIFKNLTIILIAY). Residues 152 to 160 (GEVLWFGGS) are Cytoplasmic-facing. The chain crosses the membrane as a helical span at residues 161-182 (VTGLTLFSFGLMVLSSIIAAWA). The Lumenal portion of the chain corresponds to 183–200 (DIKHAVESTGDATAKVST). The helical transmembrane segment at 201–221 (LNAGYIWMLVNCLCTSSYVLG) threads the bilayer. At 222–236 (MRKRIKLTNFKDFDT) the chain is on the cytoplasmic side. The chain crosses the membrane as a helical span at residues 237 to 257 (LAMFYNNLLSIPVLIVLTGLM). Topologically, residues 258 to 276 (EDWSSANITRNFPPADRNN) are lumenal. N-linked (GlcNAc...) asparagine glycosylation is present at Asn-264. The helical transmembrane segment at 277–297 (IIFAMILSGLSSVFISYTSAW) threads the bilayer. Over 298 to 305 (CVRVTSST) the chain is Cytoplasmic. A helical transmembrane segment spans residues 306 to 326 (TYSMVGALNKLPIALSGLIFF). Residues 327-329 (DAP) lie on the Lumenal side of the membrane. The chain crosses the membrane as a helical span at residues 330–350 (VTFPSVSAIVVGFVSGIVYAV). Residues 351-384 (AKIKQNAKPKTGVLPMSNPPVSASSQSMRDSLRS) lie on the Cytoplasmic side of the membrane. Residues 364-384 (LPMSNPPVSASSQSMRDSLRS) are disordered. Residues 369–384 (PPVSASSQSMRDSLRS) show a composition bias toward polar residues.

The protein belongs to the TPT transporter family. SLC35D subfamily. In terms of assembly, homooligomer.

Its subcellular location is the golgi apparatus membrane. The protein resides in the cytoplasmic vesicle membrane. It localises to the endoplasmic reticulum membrane. Its function is as follows. Involved in the import of GDP-mannose from the cytoplasm into the Golgi lumen. The sequence is that of GDP-mannose transporter (gmt1) from Aspergillus terreus (strain NIH 2624 / FGSC A1156).